Consider the following 859-residue polypeptide: DNA mismatch repair protein MutS (859 aa).

618 to 625 (GPNMGGKS) is an ATP binding site. Residues 803 to 829 (RDHDVQQNTEQQGTQQNMSFVPSAPSP) are disordered. Residues 808 to 819 (QQNTEQQGTQQN) are compositionally biased toward low complexity.

It belongs to the DNA mismatch repair MutS family.

In terms of biological role, this protein is involved in the repair of mismatches in DNA. It is possible that it carries out the mismatch recognition step. This protein has a weak ATPase activity. The polypeptide is DNA mismatch repair protein MutS (Shewanella pealeana (strain ATCC 700345 / ANG-SQ1)).